Consider the following 355-residue polypeptide: C-C chemokine receptor type 1 (355 aa).

Residues 1–34 (MEISDFTEAYPTTTEFDYGDSTPCQKTAVRAFGA) lie on the Extracellular side of the membrane. A helical transmembrane segment spans residues 35 to 60 (GLLPPLYSLVFIIGVVGNVLVILVLM). The Cytoplasmic portion of the chain corresponds to 61–64 (QHRR). A helical transmembrane segment spans residues 65 to 91 (LQSMTSIYLFNLAVSDLVFLFTLPFWI). The Extracellular portion of the chain corresponds to 92–107 (DYKLKDDWIFGDAMCK). Residues Cys106 and Cys183 are joined by a disulfide bond. Residues 108 to 129 (LLSGFYYLGLYSEIFFIILLTI) form a helical membrane-spanning segment. The Cytoplasmic segment spans residues 130–146 (DRYLAIVHAVFALRART). The helical transmembrane segment at 147–171 (VTFGIITSIITWALAILASMPALYF) threads the bilayer. Topologically, residues 172–197 (FKAQWEFTHRTCSPHFPYKSLKQWKR) are extracellular. Residues 198–223 (FQALKLNLLGLILPLLVMIICYAGII) traverse the membrane as a helical segment. Residues 224–239 (RILLRRPSEKKVKAVR) lie on the Cytoplasmic side of the membrane. The chain crosses the membrane as a helical span at residues 240–264 (LIFAITLLFFLLWTPYNLSVFVSAF). The Extracellular portion of the chain corresponds to 265–281 (QDVLFTNQCEQSKQLDL). A helical transmembrane segment spans residues 282-305 (AMQVTEVIAYTHCCVNPIIYVFVG). Over 306–355 (ERFWKYLRQLFQRHVAIPLAKWLPFLSVDQLERTSSISPSTGEHELSAGF) the chain is Cytoplasmic.

This sequence belongs to the G-protein coupled receptor 1 family. As to quaternary structure, interacts with CREB3. Interacts with CCL3. Interacts with CCL15. Interacts with CCL23. Interacts with GNAI1. Interacts with PF4/CXCL4. Detected in the heart, spleen, lung, peritoneal exudate cells and leukocytes.

The protein resides in the cell membrane. In terms of biological role, chemokine receptor that plays a crucial role in regulating immune cell migration, inflammation, and immune responses. Contributes to the inflammatory response by recruiting immune cells, such as monocytes, macrophages, T-cells, and dendritic cells, to sites of inflammation for the clearance of pathogens and the resolution of tissue damage. When activated by its ligands including CCL3, CCL5-9, CCL13-16 and CCL23, triggers a signaling cascade within immune cells, leading to their migration towards the source of the chemokine. For example, mediates neutrophil migration after activation by CCL3 leading to the sequential release of TNF-alpha and leukotriene B4. Also mediates monocyte migration upon CXCL4 binding. Activation by CCL5 results in neuroinflammation through the ERK1/2 signaling pathway. The polypeptide is C-C chemokine receptor type 1 (Ccr1) (Mus musculus (Mouse)).